Consider the following 257-residue polypeptide: tRNA (guanine-N(1)-)-methyltransferase (257 aa).

S-adenosyl-L-methionine-binding positions include glycine 117 and 137-142 (LGDFVL).

This sequence belongs to the RNA methyltransferase TrmD family. In terms of assembly, homodimer.

Its subcellular location is the cytoplasm. It carries out the reaction guanosine(37) in tRNA + S-adenosyl-L-methionine = N(1)-methylguanosine(37) in tRNA + S-adenosyl-L-homocysteine + H(+). In terms of biological role, specifically methylates guanosine-37 in various tRNAs. The chain is tRNA (guanine-N(1)-)-methyltransferase from Bordetella pertussis (strain Tohama I / ATCC BAA-589 / NCTC 13251).